Here is a 337-residue protein sequence, read N- to C-terminus: F420-dependent glucose-6-phosphate dehydrogenase 2 (337 aa).

D40 is a binding site for coenzyme F420-(gamma-Glu)n. The Proton donor role is filled by H41. Residues T77 and 108-109 (TG) contribute to the coenzyme F420-(gamma-Glu)n site. E110 serves as the catalytic Proton acceptor. Coenzyme F420-(gamma-Glu)n contacts are provided by residues N113, 178 to 179 (GG), and 181 to 182 (VV). 4 residues coordinate substrate: T196, K199, K260, and R284.

Belongs to the F420-dependent glucose-6-phosphate dehydrogenase family. As to quaternary structure, homodimer.

The catalysed reaction is oxidized coenzyme F420-(gamma-L-Glu)(n) + D-glucose 6-phosphate + H(+) = 6-phospho-D-glucono-1,5-lactone + reduced coenzyme F420-(gamma-L-Glu)(n). Its function is as follows. Catalyzes the coenzyme F420-dependent oxidation of glucose 6-phosphate (G6P) to 6-phosphogluconolactone. This is F420-dependent glucose-6-phosphate dehydrogenase 2 from Rhodococcus jostii (strain RHA1).